The primary structure comprises 808 residues: MSKVLLHGTLHVTVYEVDKLREGGGPNVFGKLMANIQETVGFGEGTPKIYATIDLEKSRVGRTRMIENEPQNPRWYESFHIYCAHHASNIIFTVKDDNPIGATLLGRAYMPVRELLDGDEVDKWIEIMDEDNNPTPAGSKIHVKLQYFDVTQDRNWDRGIKTGKYPGVPYTFFAQRQGCRVSLYQDAHVPDNFIPKISLAGGKYYEPHRCWEDIFDAISDAKHFIYITGWSVYTQIPLIRDPNRQKPGGDVLLGQLLKKKADEGVRVAMLVWDDRTSVNVFKEDGLMATHDEETENFFKDTDVHCILCPRDPDDGGSIIQDLKVSTMFTHHQKIVVVDHELPRGGSQKRRVMSFVGGIDLCDGRYDSAFHPLFSTLDSAHHDDFHQPNYAGASIAKGGPREPWHDIHSRVEGPIAWDVLFNFEQRWRKQGGKNVLVDLKQLDDILIPPSPVTFPNDQETWNVQLFRSIDGGAAFGFPDTPEEASKSGLVSGKDNIIDRSIQDAYINAIRRAKHFIYIENQYFLGSSFAWKSDDIDVDEVGALHLIPKELSLKIVTKIQEGEKFIVYIVVPMWPEGIPENGSVQAILDWQRRTMEMMYKDIVDALQDKGLDDDPREYLTFFCLGNREAKKSGEYEPTEAPEPDSGYLHAQENRRFMIYVHSKMMIVDDEYIIVGSANINQRSMDGARDSEIAMGAYQPYHLATQTPARGHVHGFRMALWYEHLGMLDDSFERPENKDCVNKANEMADKCWDLYASEDLDRDLPGHLLRYPVGVTRKGDITELPGTECFPDTSARILGAKSDYLPPILTT.

The C2 domain maps to 1 to 125 (MSKVLLHGTL…LDGDEVDKWI (125 aa)). Position 186 (Asp186) interacts with Ca(2+). A PLD phosphodiesterase 1 domain is found at 326–364 (TMFTHHQKIVVVDHELPRGGSQKRRVMSFVGGIDLCDGR). Catalysis depends on residues His331, Lys333, and Asp338. His331 serves as a coordination point for a 1,2-diacyl-sn-glycero-3-phosphate. Ca(2+) contacts are provided by His370 and His404. A 1,2-diacyl-sn-glycero-3-phosphate is bound by residues Gln520 and His659. The PLD phosphodiesterase 2 domain occupies 654–681 (FMIYVHSKMMIVDDEYIIVGSANINQRS). Catalysis depends on residues His659, Lys661, and Asp666. Glu720 is a Ca(2+) binding site.

It belongs to the phospholipase D family. C2-PLD subfamily. As to quaternary structure, interacts (via C2 domain) with CARDA (via RGD or KGE motifs). The cofactor is Ca(2+).

The catalysed reaction is a 1,2-diacyl-sn-glycero-3-phosphocholine + H2O = a 1,2-diacyl-sn-glycero-3-phosphate + choline + H(+). Its function is as follows. Hydrolyzes glycerol-phospholipids at the terminal phosphodiesteric bond. Plays an important role in various cellular processes. The chain is Phospholipase D alpha 1 from Cynara cardunculus (Cardoon).